The primary structure comprises 244 residues: Ribosomal RNA small subunit methyltransferase NEP1 (244 aa).

Residues 1 to 33 (MSAASGGFQPRERRFSVQEQDWETTPPKKLRLG) form a disordered region. 2 positions are modified to phosphoserine: S5 and S16. S-adenosyl-L-methionine-binding positions include T176, G201, G206, and 219–224 (ISNYPL).

Belongs to the class IV-like SAM-binding methyltransferase superfamily. RNA methyltransferase NEP1 family. As to quaternary structure, homodimer. Part of the small subunit (SSU) processome, composed of more than 70 proteins and the RNA chaperone small nucleolar RNA (snoRNA) U3.

Its subcellular location is the nucleus. The protein resides in the nucleolus. The enzyme catalyses pseudouridine(1248) in human 18S rRNA + S-adenosyl-L-methionine = N(1)-methylpseudouridine(1248) in human 18S rRNA + S-adenosyl-L-homocysteine + H(+). S-adenosyl-L-methionine-dependent pseudouridine N(1)-methyltransferase that methylates pseudouridine at position in 18S rRNA. Involved the biosynthesis of the hypermodified N1-methyl-N3-(3-amino-3-carboxypropyl) pseudouridine (m1acp3-Psi) conserved in eukaryotic 18S rRNA. Is not able to methylate uridine at this position. Also has an essential role in 40S ribosomal subunit biogenesis independent on its methyltransferase activity, facilitating the incorporation of ribosomal protein S19 during the formation of pre-ribosomes. Part of the small subunit (SSU) processome, first precursor of the small eukaryotic ribosomal subunit. During the assembly of the SSU processome in the nucleolus, many ribosome biogenesis factors, an RNA chaperone and ribosomal proteins associate with the nascent pre-rRNA and work in concert to generate RNA folding, modifications, rearrangements and cleavage as well as targeted degradation of pre-ribosomal RNA by the RNA exosome. The polypeptide is Ribosomal RNA small subunit methyltransferase NEP1 (Mus musculus (Mouse)).